An 864-amino-acid polypeptide reads, in one-letter code: Eukaryotic translation initiation factor 3 subunit C (864 aa).

The disordered stretch occupies residues 1-77; the sequence is MSRFFARGGS…EESEDEERVT (77 aa). A compositionally biased stretch (acidic residues) spans 14 to 54; that stretch reads SSSEDEQELYSDREEEEQFSDSEEESSEAESSEEESSDDEG. Positions 602–776 constitute a PCI domain; the sequence is FHMHINLELL…NAIVFRKGVE (175 aa). Residues 815-864 are disordered; sequence RDQGAGARGGRGAGRGGQARGGPRFPGGQQGRRPGGQQFSGGALGGAIKA. The span at 820-864 shows a compositional bias: gly residues; that stretch reads GARGGRGAGRGGQARGGPRFPGGQQGRRPGGQQFSGGALGGAIKA.

The protein belongs to the eIF-3 subunit C family. In terms of assembly, component of the eukaryotic translation initiation factor 3 (eIF-3) complex.

The protein localises to the cytoplasm. Its function is as follows. Component of the eukaryotic translation initiation factor 3 (eIF-3) complex, which is involved in protein synthesis of a specialized repertoire of mRNAs and, together with other initiation factors, stimulates binding of mRNA and methionyl-tRNAi to the 40S ribosome. The eIF-3 complex specifically targets and initiates translation of a subset of mRNAs involved in cell proliferation. This chain is Eukaryotic translation initiation factor 3 subunit C (nip1), found in Aspergillus terreus (strain NIH 2624 / FGSC A1156).